The sequence spans 247 residues: Phosphate import ATP-binding protein PstB (247 aa).

Positions cysteine 2–isoleucine 242 constitute an ABC transporter domain. Glycine 32–serine 39 contributes to the ATP binding site.

The protein belongs to the ABC transporter superfamily. Phosphate importer (TC 3.A.1.7) family. As to quaternary structure, the complex is composed of two ATP-binding proteins (PstB), two transmembrane proteins (PstC and PstA) and a solute-binding protein (PstS).

It localises to the cell inner membrane. The enzyme catalyses phosphate(out) + ATP + H2O = ADP + 2 phosphate(in) + H(+). Its function is as follows. Part of the ABC transporter complex PstSACB involved in phosphate import. Responsible for energy coupling to the transport system. The sequence is that of Phosphate import ATP-binding protein PstB from Methylococcus capsulatus (strain ATCC 33009 / NCIMB 11132 / Bath).